A 216-amino-acid chain; its full sequence is uncharacterized protein (216 aa).

Residues 7–29 (ILVIFFLIFFIGFEFSDMTLAFI) form a helical membrane-spanning segment.

Its subcellular location is the membrane. This is an uncharacterized protein from Archaeoglobus fulgidus (strain ATCC 49558 / DSM 4304 / JCM 9628 / NBRC 100126 / VC-16).